The sequence spans 166 residues: uncharacterized protein (166 aa).

This is an uncharacterized protein from Homo sapiens (Human).